Consider the following 321-residue polypeptide: Cysteine and histidine-rich domain-containing protein 1 (321 aa).

16 residues coordinate Zn(2+): Cys-9, Cys-14, Cys-28, His-31, Cys-46, Cys-47, Cys-63, His-68, Cys-152, Cys-157, Cys-170, His-173, Cys-188, Cys-189, Cys-205, and His-210. CHORD domains follow at residues 9-68 (CYHK…RGKH) and 152-210 (CRNN…SGEH). The CS domain maps to 218–308 (VSKFREDWFS…KHGTGWPRLK (91 aa)).

In terms of biological role, regulates centrosome duplication. Controls the secretion of the tyrosine kinase receptor let-23/EGFR from the endoplasmic reticulum and is required for the localization of let-23/EGFR to the plasma membrane of vulval precursor cells. It thus plays a role in positively regulating let/EGFR signaling, and anchor cell and vulval precursor cell alignment. Plays a role in vulval development and morphogenesis. This Caenorhabditis elegans protein is Cysteine and histidine-rich domain-containing protein 1.